A 640-amino-acid polypeptide reads, in one-letter code: Insulin-like growth factor 1 receptor (640 aa).

Fibronectin type-III domains follow at residues 5–101 (VPRP…TMPA) and 107–200 (IPGP…VQAK). At 14–208 (EVMQIANTTM…AKTTYENFIH (195 aa)) the chain is on the extracellular side. 5 N-linked (GlcNAc...) asparagine glycosylation sites follow: asparagine 20, asparagine 29, asparagine 37, asparagine 173, and asparagine 186. The helical transmembrane segment at 209–232 (LMIALPIAVLLIVGGLVIMLYVFH) threads the bilayer. Residues 233–640 (RKRNSSRLGN…ALPLPQSSTC (408 aa)) are Cytoplasmic-facing. An IRS1- and SHC1-binding motif is present at residues 250 to 253 (NPEY). Tyrosine 253 is subject to Phosphotyrosine. The Protein kinase domain occupies 272–547 (ITMSRELGQG…SVKDEMEAGF (276 aa)). ATP contacts are provided by residues 278 to 286 (LGQGSFGMV) and lysine 306. The active-site Proton acceptor is aspartate 408. Phosphotyrosine; by autocatalysis occurs at positions 434, 438, and 439. Residues lysine 441 and lysine 444 each participate in a glycyl lysine isopeptide (Lys-Gly) (interchain with G-Cter in ubiquitin) cross-link. Serine 551 carries the phosphoserine; by GSK3-beta modification. Serine 555 is modified (phosphoserine). The tract at residues 555-640 (SEENKPPEPE…ALPLPQSSTC (86 aa)) is disordered. Residues 563–572 (PEELDLEPEN) are compositionally biased toward acidic residues. Low complexity predominate over residues 573–589 (MESVPLDPSASSASLPL). Residues 590 to 599 (PDRHSGHKAE) are compositionally biased toward basic and acidic residues.

The protein belongs to the protein kinase superfamily. Tyr protein kinase family. Insulin receptor subfamily. Tetramer of 2 alpha and 2 beta chains linked by disulfide bonds. The alpha chains contribute to the formation of the ligand-binding domain, while the beta chain carries the kinase domain. Interacts with PIK3R1 and with the PTB/PID domains of IRS1 and SHC1 in vitro when autophosphorylated on tyrosine residues. Forms a hybrid receptor with INSR, the hybrid is a tetramer consisting of 1 alpha chain and 1 beta chain of INSR and 1 alpha chain and 1 beta chain of IGF1R. Interacts with ARRB1 and ARRB2. Interacts with GRB10. Interacts with RACK1. Interacts with SOCS1, SOCS2 and SOCS3. Interacts with 14-3-3 proteins. Interacts with NMD2. Interacts with MAP3K5. Interacts with STAT3. Interacts (nascent precursor form) with ZFAND2B. In terms of processing, autophosphorylated on tyrosine residues in response to ligand binding. Autophosphorylation occurs in trans, i.e. one subunit of the dimeric receptor phosphorylates tyrosine residues on the other subunit. Autophosphorylation occurs in a sequential manner; Tyr-438 is predominantly phosphorylated first, followed by phosphorylation of Tyr-434 and Tyr-439. While every single phosphorylation increases kinase activity, all three tyrosine residues in the kinase activation loop (Tyr-438, Tyr-434 and Tyr-439) have to be phosphorylated for optimal activity. Can be autophosphorylated at additional tyrosine residues (in vitro). Autophosphorylated is followed by phosphorylation of juxtamembrane tyrosines and C-terminal serines. May also be phosphorylated at Tyr-434 and Tyr-439 by mTORC2. Phosphorylation of Tyr-253 is required for IRS1- and SHC1-binding. Phosphorylation of Ser-551 by GSK-3beta restrains kinase activity and promotes cell surface expression, it requires a priming phosphorylation at Ser-555. Dephosphorylated by PTPN1. Post-translationally, polyubiquitinated at Lys-441 and Lys-444 through both 'Lys-48' and 'Lys-29' linkages, promoting receptor endocytosis and subsequent degradation by the proteasome. Ubiquitination is facilitated by pre-existing phosphorylation. Sumoylated with SUMO1. In terms of processing, controlled by regulated intramembrane proteolysis (RIP). Undergoes metalloprotease-dependent constitutive ectodomain shedding to produce a membrane-anchored 52 kDa C-Terminal fragment which is further processed by presenilin gamma-secretase to yield an intracellular 50 kDa fragment.

It localises to the cell membrane. The enzyme catalyses L-tyrosyl-[protein] + ATP = O-phospho-L-tyrosyl-[protein] + ADP + H(+). With respect to regulation, activated by autophosphorylation at Tyr-434, Tyr-438 and Tyr-439 on the kinase activation loop; phosphorylation at all three tyrosine residues is required for optimal kinase activity. Inhibited by MSC1609119A-1, BMS-754807, PQIP, benzimidazole pyridinone, isoquinolinedione, bis-azaindole, 3-cyanoquinoline, 2,4-bis-arylamino-1,3-pyrimidine, pyrrolopyrimidine, pyrrole-5-carboxaldehyde, picropodophyllin (PPP), tyrphostin derivatives. While most inhibitors bind to the ATP binding pocket, MSC1609119A-1 functions as allosteric inhibitor and binds close to the DFG motif and the activation loop. Receptor tyrosine kinase which mediates actions of insulin-like growth factor 1 (IGF1). Binds IGF1 with high affinity and IGF2 and insulin (INS) with a lower affinity. The activated IGF1R is involved in cell growth and survival control. IGF1R is crucial for tumor transformation and survival of malignant cell. Ligand binding activates the receptor kinase, leading to receptor autophosphorylation, and tyrosines phosphorylation of multiple substrates, that function as signaling adapter proteins including, the insulin-receptor substrates (IRS1/2), Shc and 14-3-3 proteins. Phosphorylation of IRSs proteins lead to the activation of two main signaling pathways: the PI3K-AKT/PKB pathway and the Ras-MAPK pathway. The result of activating the MAPK pathway is increased cellular proliferation, whereas activating the PI3K pathway inhibits apoptosis and stimulates protein synthesis. Phosphorylated IRS1 can activate the 85 kDa regulatory subunit of PI3K (PIK3R1), leading to activation of several downstream substrates, including protein AKT/PKB. AKT phosphorylation, in turn, enhances protein synthesis through mTOR activation and triggers the antiapoptotic effects of IGFIR through phosphorylation and inactivation of BAD. In parallel to PI3K-driven signaling, recruitment of Grb2/SOS by phosphorylated IRS1 or Shc leads to recruitment of Ras and activation of the ras-MAPK pathway. In addition to these two main signaling pathways IGF1R signals also through the Janus kinase/signal transducer and activator of transcription pathway (JAK/STAT). Phosphorylation of JAK proteins can lead to phosphorylation/activation of signal transducers and activators of transcription (STAT) proteins. In particular activation of STAT3, may be essential for the transforming activity of IGF1R. The JAK/STAT pathway activates gene transcription and may be responsible for the transforming activity. JNK kinases can also be activated by the IGF1R. IGF1 exerts inhibiting activities on JNK activation via phosphorylation and inhibition of MAP3K5/ASK1, which is able to directly associate with the IGF1R. When present in a hybrid receptor with INSR, binds IGF1. This Bos taurus (Bovine) protein is Insulin-like growth factor 1 receptor (IGF1R).